Reading from the N-terminus, the 355-residue chain is Tetraacyldisaccharide 4'-kinase (355 aa).

ATP is bound at residue 64–71; it reads YVGGTGKT. Positions 206 to 226 are disordered; sequence NRAPQSSATPTAASGQGPRRA. Residues 208 to 222 are compositionally biased toward low complexity; the sequence is APQSSATPTAASGQG.

Belongs to the LpxK family.

The catalysed reaction is a lipid A disaccharide + ATP = a lipid IVA + ADP + H(+). It functions in the pathway glycolipid biosynthesis; lipid IV(A) biosynthesis; lipid IV(A) from (3R)-3-hydroxytetradecanoyl-[acyl-carrier-protein] and UDP-N-acetyl-alpha-D-glucosamine: step 6/6. Transfers the gamma-phosphate of ATP to the 4'-position of a tetraacyldisaccharide 1-phosphate intermediate (termed DS-1-P) to form tetraacyldisaccharide 1,4'-bis-phosphate (lipid IVA). In Bordetella petrii (strain ATCC BAA-461 / DSM 12804 / CCUG 43448), this protein is Tetraacyldisaccharide 4'-kinase.